We begin with the raw amino-acid sequence, 222 residues long: UPF0128 protein PYRAB08320 (222 aa).

This sequence belongs to the UPF0128 family.

The polypeptide is UPF0128 protein PYRAB08320 (Pyrococcus abyssi (strain GE5 / Orsay)).